The chain runs to 130 residues: UPF0102 protein RSc3265 (130 aa).

It belongs to the UPF0102 family.

The protein is UPF0102 protein RSc3265 of Ralstonia nicotianae (strain ATCC BAA-1114 / GMI1000) (Ralstonia solanacearum).